Reading from the N-terminus, the 112-residue chain is Cytochrome c-551 (112 aa).

The N-terminal stretch at 1–20 (MKSKLSILMIGFALSVLLAA) is a signal peptide. C21 carries the N-palmitoyl cysteine lipid modification. The S-diacylglycerol cysteine moiety is linked to residue C21. A compositionally biased stretch (basic and acidic residues) spans 25–35 (DAKEEKTDTGS). The disordered stretch occupies residues 25–44 (DAKEEKTDTGSKTEATASEG). A Cytochrome c domain is found at 39–112 (ATASEGEELY…VIAKWLSEKK (74 aa)). Heme c-binding residues include C52, C55, H56, and M91.

Post-translationally, binds 1 heme c group covalently per subunit.

The protein localises to the cell membrane. Functionally, electron carrier protein. The polypeptide is Cytochrome c-551 (cccB) (Bacillus subtilis (strain 168)).